Reading from the N-terminus, the 688-residue chain is UvrABC system protein B (688 aa).

One can recognise a Helicase ATP-binding domain in the interval 31–188 (GRVNAGEPDV…RKFVSMQYQR (158 aa)). 44-51 (GATGTGKS) contributes to the ATP binding site. The Beta-hairpin signature appears at 97-120 (YYDYYQPEAYVPQTDTFIEKDSSV). A Helicase C-terminal domain is found at 434-587 (QIDDLLEQIR…QVAYNTEHGI (154 aa)). Residues 607-632 (GEDTKKMLEGRGGGKRSPTPNLRREG) form a disordered region. The UVR domain occupies 642-677 (ETIISDLNDQMLQAAGELKFELAARLRDELGDLKRE).

This sequence belongs to the UvrB family. As to quaternary structure, forms a heterotetramer with UvrA during the search for lesions. Interacts with UvrC in an incision complex.

It localises to the cytoplasm. Functionally, the UvrABC repair system catalyzes the recognition and processing of DNA lesions. A damage recognition complex composed of 2 UvrA and 2 UvrB subunits scans DNA for abnormalities. Upon binding of the UvrA(2)B(2) complex to a putative damaged site, the DNA wraps around one UvrB monomer. DNA wrap is dependent on ATP binding by UvrB and probably causes local melting of the DNA helix, facilitating insertion of UvrB beta-hairpin between the DNA strands. Then UvrB probes one DNA strand for the presence of a lesion. If a lesion is found the UvrA subunits dissociate and the UvrB-DNA preincision complex is formed. This complex is subsequently bound by UvrC and the second UvrB is released. If no lesion is found, the DNA wraps around the other UvrB subunit that will check the other stand for damage. The polypeptide is UvrABC system protein B (Clavibacter sepedonicus (Clavibacter michiganensis subsp. sepedonicus)).